Here is a 1065-residue protein sequence, read N- to C-terminus: Putative guanine nucleotide-exchange factor SED4 (1065 aa).

Over 1 to 346 (MSGNSANYDV…SSSILRNIWK (346 aa)) the chain is Cytoplasmic. Ser-65 carries the post-translational modification Phosphoserine. WD repeat units lie at residues 259-298 (FDLNGITSMDVSPNKKFVALSSNDNLVAIVSVEKLKLVQL) and 302-341 (VHESTITKVTFSPDSRYLASTSMGNTINVLKLSGTSSSIL). The helical; Signal-anchor for type II membrane protein transmembrane segment at 347 to 365 (FFLNFVLLVVLAGAIQLGY) threads the bilayer. Residues 366–1065 (KHNVHGFIYK…VNYAGLHDEL (700 aa)) are Lumenal-facing. Asn-388 carries N-linked (GlcNAc...) asparagine glycosylation. 3 disordered regions span residues 458-477 (TSADIPTSASSSSSSSSSSF), 482-520 (VTNEPIVSSPTSEITKPLASPTEPNIVEKPSLPLNSESI), and 551-625 (QSES…SFLD). Over residues 465–476 (SASSSSSSSSSS) the composition is skewed to low complexity. Residues 482–495 (VTNEPIVSSPTSEI) show a composition bias toward polar residues. Over residues 568–621 (STESPSLSHMPSSSSSSLSLSSSLTTSPTTALSTSTATAVTTTQTNPTNDAANT) the composition is skewed to low complexity. Asn-620 carries an N-linked (GlcNAc...) asparagine glycan. 4 repeat units span residues 824–833 (IDNSEYTSVL), 834–843 (ADNLEPTSVL), 844–853 (ADNSEPTSVL), and 854–863 (ADSSEPTSVF). Residues 824 to 863 (IDNSEYTSVLADNLEPTSVLADNSEPTSVLADSSEPTSVF) form a 4 X 10 AA tandem repeats region. N-linked (GlcNAc...) asparagine glycosylation is present at Asn-1039. The short motif at 1062 to 1065 (HDEL) is the Prevents secretion from ER element.

It belongs to the WD repeat SEC12 family.

It localises to the endoplasmic reticulum membrane. Its subcellular location is the golgi apparatus membrane. In terms of biological role, putative guanine nucleotide-exchange factor (GEF) involved in the formation or budding of transport vesicles from the ER. Positive regulator of SAR1 probably through inhibition of the GTPase activation by SEC23. This is Putative guanine nucleotide-exchange factor SED4 (SED4) from Saccharomyces cerevisiae (strain ATCC 204508 / S288c) (Baker's yeast).